A 288-amino-acid polypeptide reads, in one-letter code: General transcription factor IIE subunit 2 (288 aa).

Residues 16–56 (ALTTPAVEKRPSASSESSKKKRAKLELSSTSGSKPSSDGSN) form a disordered region. Residues 41 to 56 (ELSSTSGSKPSSDGSN) show a composition bias toward low complexity. Residues 63-143 (SLSGSSGYKF…YAFKPKYNLK (81 aa)) constitute a DNA-binding region (TFIIE beta).

The protein belongs to the TFIIE beta subunit family. In terms of assembly, tetramer of two alpha and two beta chains.

The protein localises to the nucleus. In terms of biological role, recruits TFIIH to the initiation complex and stimulates the RNA polymerase II C-terminal domain kinase and DNA-dependent ATPase activities of TFIIH. Both TFIIH and TFIIE are required for promoter clearance by RNA polymerase. The sequence is that of General transcription factor IIE subunit 2 (gtf2e2) from Xenopus laevis (African clawed frog).